A 297-amino-acid chain; its full sequence is HTH-type transcriptional regulator AceR (297 aa).

One can recognise an HTH lysR-type domain in the interval 1 to 60 (MNINQEQLLMFQAVMETGSFSAAARKLGKVPSAVSMSIANLEIDLNLTLFERKGREPTPT). Positions 20–39 (FSAAARKLGKVPSAVSMSIA) form a DNA-binding region, H-T-H motif.

Belongs to the LysR transcriptional regulatory family. In terms of assembly, homodimer and homotetramer. Binding of chlorhexidine at the inducer-binding domain causes a quaternary structural change that favors interactions between dimers to form tetramers.

Its subcellular location is the cytoplasm. Functionally, regulates the expression of the AceI transporter. Binds DNA and chlorhexidine. Binds to regulatory sites within the intergenic region between the aceI and aceR genes, and affects the interaction between RNA polymerase (RNAP) and promoter DNA both in the presence and in the absence of chlorhexidine. In the absence of chlorhexidine, prevents transcription of the aceI gene by disrupting interactions between the promoter DNA and RNAP. In the presence of chlorhexidine, activates expression of aceI. When AceR interacts with chlorhexidine, it undergoes a conformational change and the tetrameric form either releases the DNA or shifts the position of the DNA-binding region to allow RNAP to bind onto the promoter DNA to proceed with aceI transcription. This Acinetobacter baumannii (strain ATCC 17978 / DSM 105126 / CIP 53.77 / LMG 1025 / NCDC KC755 / 5377) protein is HTH-type transcriptional regulator AceR.